Here is a 259-residue protein sequence, read N- to C-terminus: MENVYISSYSSNEQTSMAVAATDIRELLSQYVDDANLEDLIEWAMEKSSKYYIKNIGNTKSNIEETKFESKNNIGIEYSKDSRNKLSYRNKPSIATNLEYKTLCDMIKGTSGTEKEFLRYLLFGIKCIKKGVEYNIDKIKDVSYNDYFNVLDEKYNTPCPNCKSRNTTPMMIQTRAADEPPLVRHACRDCKQHFKPPKFRAFRNLNVTTQSIHENKEITEILPDNNPSPPESPEPASPIDDGLIRATFDRNDEPPEDDE.

Residues 155–195 form a TFIIS-type zinc finger; the sequence is YNTPCPNCKSRNTTPMMIQTRAADEPPLVRHACRDCKQHFK. Zn(2+) is bound by residues Cys159, Cys162, Cys187, and Cys190. A disordered region spans residues 220–259; sequence EILPDNNPSPPESPEPASPIDDGLIRATFDRNDEPPEDDE. The span at 226–236 shows a compositional bias: pro residues; that stretch reads NPSPPESPEPA.

This sequence belongs to the poxviridae DNA-directed RNA polymerase 30 kDa subunit family. The DNA-dependent RNA polymerase (vRNAP) consists of eight subunits encoded by early viral genes and termed according to their apparent molecular masses Rpo147, Rpo132, Rpo35, Rpo30, Rpo22, Rpo19, Rpo18, and Rpo7. The same holoenzyme, with the addition of the transcription-specificity factor RAP94, is used for early gene expression.

Its subcellular location is the virion. The protein resides in the host cytoplasm. It catalyses the reaction RNA(n) + a ribonucleoside 5'-triphosphate = RNA(n+1) + diphosphate. Functionally, part of the DNA-dependent RNA polymerase which catalyzes the transcription of viral DNA into RNA using the four ribonucleoside triphosphates as substrates. Responsible for the transcription of early, intermediate and late genes. DNA-dependent RNA polymerase associates with the early transcription factor (ETF), itself composed of OPG118 and OPG134, thereby allowing the early genes transcription. Late transcription, and probably also intermediate transcription, require newly synthesized RNA polymerase. In Homo sapiens (Human), this protein is DNA-directed RNA polymerase 30 kDa polypeptide (OPG066).